The primary structure comprises 786 residues: Endonuclease MutS2 (786 aa).

Residue 335 to 342 (GPNTGGKT) participates in ATP binding. Positions 711 to 786 (LDLRGERFEN…GLGVTVVELK (76 aa)) constitute a Smr domain.

This sequence belongs to the DNA mismatch repair MutS family. MutS2 subfamily. Homodimer. Binds to stalled ribosomes, contacting rRNA.

Its function is as follows. Endonuclease that is involved in the suppression of homologous recombination and thus may have a key role in the control of bacterial genetic diversity. Acts as a ribosome collision sensor, splitting the ribosome into its 2 subunits. Detects stalled/collided 70S ribosomes which it binds and splits by an ATP-hydrolysis driven conformational change. Acts upstream of the ribosome quality control system (RQC), a ribosome-associated complex that mediates the extraction of incompletely synthesized nascent chains from stalled ribosomes and their subsequent degradation. Probably generates substrates for RQC. The polypeptide is Endonuclease MutS2 (Bacillus cereus (strain ATCC 10987 / NRS 248)).